An 873-amino-acid polypeptide reads, in one-letter code: Ectonucleotide pyrophosphatase/phosphodiesterase family member 3 (873 aa).

At 1 to 11 (MESMLTLAMEQ) the chain is on the cytoplasmic side. Residues 12–30 (PVKRNTLKKYKIACIVLLA) traverse the membrane as a helical; Signal-anchor for type II membrane protein segment. At 31–873 (LLVIVSLGLG…TYLPTFETTI (843 aa)) the chain is on the extracellular side. SMB domains are found at residues 51 to 93 (QGSC…VEST) and 94 to 138 (RIWM…GETS). 10 cysteine pairs are disulfide-bonded: cysteine 54–cysteine 71, cysteine 58–cysteine 89, cysteine 69–cysteine 82, cysteine 75–cysteine 81, cysteine 98–cysteine 115, cysteine 103–cysteine 133, cysteine 113–cysteine 126, cysteine 119–cysteine 125, cysteine 144–cysteine 190, and cysteine 152–cysteine 364. Positions 78-80 (RGD) match the Cell attachment site motif. The segment at 160–544 (PVILFSMDGF…HGSLNHLLKV (385 aa)) is phosphodiesterase. Zn(2+) is bound at residue aspartate 167. Lysine 204 provides a ligand contact to ATP. Threonine 205 lines the Zn(2+) pocket. Residue threonine 205 is the Nucleophile of the active site. Residue asparagine 226 participates in ATP binding. Asparagine 236 carries an N-linked (GlcNAc...) asparagine glycan. ATP is bound at residue glutamate 275. An N-linked (GlcNAc...) asparagine glycan is attached at asparagine 279. An ATP-binding site is contributed by tyrosine 289. The N-linked (GlcNAc...) asparagine glycan is linked to asparagine 290. 4 residues coordinate Zn(2+): aspartate 325, histidine 329, aspartate 372, and histidine 373. Intrachain disulfides connect cysteine 380–cysteine 477, cysteine 428–cysteine 816, cysteine 561–cysteine 621, cysteine 573–cysteine 677, cysteine 575–cysteine 662, and cysteine 785–cysteine 795. The N-linked (GlcNAc...) asparagine glycan is linked to asparagine 425. Histidine 482 lines the Zn(2+) pocket. Residues asparagine 532, asparagine 592, asparagine 685, and asparagine 697 are each glycosylated (N-linked (GlcNAc...) asparagine). Residues 580–873 (NSIQLEQVNQ…TYLPTFETTI (294 aa)) form a nuclease region. Ca(2+) contacts are provided by aspartate 750, asparagine 752, aspartate 754, histidine 756, and aspartate 758. An N-linked (GlcNAc...) asparagine glycan is attached at asparagine 787.

As to quaternary structure, monomer and homodimer. It depends on Zn(2+) as a cofactor. N-glycosylated. N-glycosylation is necessary for normal transport to the cell membrane, but is not the apical targeting signal.

It localises to the cell membrane. Its subcellular location is the apical cell membrane. The protein resides in the secreted. The catalysed reaction is a ribonucleoside 5'-triphosphate + H2O = a ribonucleoside 5'-phosphate + diphosphate + H(+). It carries out the reaction ATP + H2O = AMP + diphosphate + H(+). It catalyses the reaction CTP + H2O = CMP + diphosphate + H(+). The enzyme catalyses GTP + H2O = GMP + diphosphate + H(+). The catalysed reaction is UTP + H2O = UMP + diphosphate + H(+). It carries out the reaction UDP-N-acetyl-alpha-D-glucosamine + H2O = N-acetyl-alpha-D-glucosamine 1-phosphate + UMP + 2 H(+). It catalyses the reaction P(1),P(3)-bis(5'-adenosyl) triphosphate + H2O = AMP + ADP + 2 H(+). The enzyme catalyses P(1),P(4)-bis(5'-adenosyl) tetraphosphate + H2O = AMP + ATP + 2 H(+). The catalysed reaction is P(1),P(5)-bis(5'-adenosyl) pentaphosphate + H2O = adenosine 5'-tetraphosphate + AMP + 2 H(+). It carries out the reaction P(1),P(4)-bis(5'-guanosyl) tetraphosphate + H2O = GMP + GTP + 2 H(+). It catalyses the reaction Hydrolytically removes 5'-nucleotides successively from the 3'-hydroxy termini of 3'-hydroxy-terminated oligonucleotides.. In terms of biological role, hydrolase that metabolizes extracellular nucleotides, including ATP, GTP, UTP and CTP. Limits mast cells and basophils response during inflammation and during the chronic phases of allergic responses by eliminating extracellular ATP, a signaling molecule activating these cells in an autocrine manner. Metabolizes extracellular ATP in the lumen of the small intestine, and thereby prevents ATP-induced apoptosis of intestinal plasmacytoid dendritic cells. Has a broad specificity and can also hydrolyze UDP-GlcNAc into UMP and GlcNAc-1-phosphate and potentially several other intracellular nucleotide sugars, including UDP-GalNAc, CMP-NeuAc, GDP-Fuc, and UDP-GlcA. Thereby, could modulate glycan biosynthesis and protein glycosylation. Can hydrolyze extracellular dinucleoside polyphosphates, including the vasoactive adenosine polyphosphates as well. In addition, displays an alkaline phosphodiesterase activity in vitro. This chain is Ectonucleotide pyrophosphatase/phosphodiesterase family member 3, found in Pongo abelii (Sumatran orangutan).